Reading from the N-terminus, the 438-residue chain is MALESVWAPQAAVIGDGLSERVGEQASPQTQVLQTASLKDGPAKRAVWVRRDHSEPEPTTSPEVKKPKLELTKAVVVDLGTGYCKCGFAGLPKPTHRISTTVGKPYMETAKTGDNRKETFVGHELINPEVRLKLINPLRHGIIVDWDTVQDIWEYLFHQEMKIAPEEHAVLVSDPPLSPHTNREKYAEMLFETFKTPAMHIAYQSRLSMYSYGRTSGLVVEVGHGVSYVVPIYEGYPLPSITGRLDYAGSDLTTYLMCLMNTAGKHFTEGQLGIVEDIKKKCCFVALDPIEEKKVPATEHMIQYTLPDGQAIYLCQERFLCSEMFFKPSLIKSMQLGLHTQTVSCLNKCDIALKRDLMGNILLCGGSTMLSGFPNRLQKELSSMCPNDTPQVSVLPERDTAVWTGGSILASLQGFQPLWVHRSEYEEHGPFFLYRRCF.

Positions 36-56 are required for interaction with TES; the sequence is ASLKDGPAKRAVWVRRDHSEP.

This sequence belongs to the actin family. Interacts (via N-terminus) with TES (via LIM domain 2). Heterodimer with TES; the heterodimer interacts with ENAH to form a heterotrimer. Interacts with ACTL9. Interacts with CYLC1; the interaction may be relevant for proper acrosome attachment to the nuclear envelope.

It localises to the cytoplasm. It is found in the cytoskeleton. Its subcellular location is the golgi apparatus. The protein resides in the nucleus. Functionally, essential for normal spermatogenesis and male fertility. Required for normal sperm head morphology, acroplaxome formation, acrosome attachment, and acrosome granule stability. May anchor and stabilize acrosomal adherence to the acroplaxome at least in part by facilitating the presence of F-actin in the subacrosomal space. May play an important role in formation and fusion of Golgi-derived vesicles during acrosome biogenesis. This Bos taurus (Bovine) protein is Actin-like protein 7A (ACTL7A).